The chain runs to 2032 residues: Transient receptor potential channel (2032 aa).

The segment covering 129–139 (KKTRKHRRRRS) has biased composition (basic residues). 5 disordered regions span residues 129-162 (KKTRKHRRRRSGSFTGGVYPRKGHRNRSLLGHAI), 197-223 (QSKGGDQVPPTSTTTGGAGGDGNAVPT), 831-860 (KKAMGVFSSRPSRTGSGIASRQSTEGMGGV), 912-945 (ANPMRPPNLGDSRDCGSEFDEELSLTSASDGSQT), and 1120-1211 (AAEH…EAGN). Composition is skewed to polar residues over residues 839-855 (SRPSRTGSGIASRQSTE), 935-945 (SLTSASDGSQT), and 1120-1129 (AAEHQNDMNY). Positions 1130–1149 (SSSSSSSSSSSSSSSSSDSS) are enriched in low complexity. Polar residues predominate over residues 1171–1185 (TSQGSAQSLNITSLF). 5 consecutive transmembrane segments (helical) span residues 1310-1330 (FWSWTISFILFITFFTYTLLV), 1332-1352 (TPPRPTVIEYILIAYVAAFGL), 1374-1394 (VCSFWNCVTILAIIFYIVGFF), 1439-1459 (MIQNMSYIIVMLVVTLLSFGL), and 1535-1555 (LMTFFLLIANILLMSMLIAIF). 4 disordered regions span residues 1753-1779 (GTDPILEEKDHDSGENSNSLPPGRIRR), 1853-1909 (HPER…SRDQ), 1935-1982 (EEED…EEVD), and 1999-2032 (LNEEEQAGAPHSTPVIASPSSSRADLTSQKCSDV). Acidic residues predominate over residues 1935 to 1947 (EEEDEEEDDEEDD). Positions 1951 to 1962 (RHHIHPRRKSSR) are enriched in basic residues. Residues 2016-2032 (SPSSSRADLTSQKCSDV) show a composition bias toward polar residues.

This sequence belongs to the transient receptor (TC 1.A.4) family. LTrpC subfamily. In terms of tissue distribution, gonads.

It is found in the membrane. In terms of biological role, required for initiation and continuation of postembryonic mitotic cell divisions of gonadal cells Z1 and Z4. Zygotic expression is necessary for hermaphrodite fertility. May be a cation channel. The sequence is that of Transient receptor potential channel (gon-2) from Caenorhabditis elegans.